Consider the following 341-residue polypeptide: Methionine import ATP-binding protein MetN 2 (341 aa).

An ABC transporter domain is found at 2–241 (IELKEVVKEY…PQHTVTKRFV (240 aa)). Residue 38 to 45 (GFSGAGKS) participates in ATP binding.

The protein belongs to the ABC transporter superfamily. Methionine importer (TC 3.A.1.24) family. The complex is composed of two ATP-binding proteins (MetN), two transmembrane proteins (MetI) and a solute-binding protein (MetQ).

It localises to the cell membrane. It catalyses the reaction L-methionine(out) + ATP + H2O = L-methionine(in) + ADP + phosphate + H(+). It carries out the reaction D-methionine(out) + ATP + H2O = D-methionine(in) + ADP + phosphate + H(+). Its function is as follows. Part of the ABC transporter complex MetNIQ involved in methionine import. Responsible for energy coupling to the transport system. This is Methionine import ATP-binding protein MetN 2 from Staphylococcus aureus (strain bovine RF122 / ET3-1).